Consider the following 190-residue polypeptide: MSIKEDKWIRKMALAHGMIEPFADGQVNLNPETGEKLISYGLSSYGYDLRLSREFKVFTNVYNSLVDPKRFTEDTFISITDDVCIIPPNSFALAHSVEYFRIPRNVLTMCIGKSTYARCGLIVNVTPFEPEWEGYVTIEISNTTPLPAKIYANEGIAQVLFFEADEICEVSYAERKGKYQKQQGITVPFV.

113-118 (KSTYAR) contributes to the dCTP binding site. E139 acts as the Proton donor/acceptor in catalysis. Residues Q158, Y172, K181, and Q182 each contribute to the dCTP site.

Belongs to the dCTP deaminase family. In terms of assembly, homotrimer.

It carries out the reaction dCTP + H2O + H(+) = dUTP + NH4(+). It participates in pyrimidine metabolism; dUMP biosynthesis; dUMP from dCTP (dUTP route): step 1/2. In terms of biological role, catalyzes the deamination of dCTP to dUTP. This Chlamydia abortus (strain DSM 27085 / S26/3) (Chlamydophila abortus) protein is dCTP deaminase.